The primary structure comprises 198 residues: Peptidyl-tRNA hydrolase (198 aa).

Tyrosine 15 is a binding site for tRNA. The active-site Proton acceptor is the histidine 20. Phenylalanine 66, asparagine 68, and asparagine 114 together coordinate tRNA.

This sequence belongs to the PTH family. As to quaternary structure, monomer.

It is found in the cytoplasm. It catalyses the reaction an N-acyl-L-alpha-aminoacyl-tRNA + H2O = an N-acyl-L-amino acid + a tRNA + H(+). Its function is as follows. Hydrolyzes ribosome-free peptidyl-tRNAs (with 1 or more amino acids incorporated), which drop off the ribosome during protein synthesis, or as a result of ribosome stalling. Catalyzes the release of premature peptidyl moieties from peptidyl-tRNA molecules trapped in stalled 50S ribosomal subunits, and thus maintains levels of free tRNAs and 50S ribosomes. This is Peptidyl-tRNA hydrolase from Cupriavidus necator (strain ATCC 17699 / DSM 428 / KCTC 22496 / NCIMB 10442 / H16 / Stanier 337) (Ralstonia eutropha).